The following is a 33-amino-acid chain: Alpha-amanitin proprotein (33 aa).

Positions 1-10 (MSDINATRLP) are excised as a propeptide. Position 11 is a (3R,4R)-4,5-dihydroxyisoleucine; in form alpha-amanitin (isoleucine 11). At isoleucine 11 the chain carries (3R,4S)-4-hydroxyisoleucine; in form gamma-amanitin. Positions 11–18 (IWGIGCNP) form a cross-link, cyclopeptide (Ile-Pro). The 2'-cysteinyl-6'-hydroxytryptophan sulfoxide (Trp-Cys) cross-link spans 12 to 16 (WGIGC). Proline 18 carries the post-translational modification 4-hydroxyproline. Positions 19 to 33 (CVGDEVTALITRGEA) are excised as a propeptide.

It belongs to the MSDIN fungal toxin family. Processed by the macrocyclase-peptidase enzyme POPB to yield a toxic cyclic decapeptide. POPB first removes 10 residues from the N-terminus. Conformational trapping of the remaining peptide forces the enzyme to release this intermediate rather than proceed to macrocyclization. The enzyme rebinds the remaining peptide in a different conformation and catalyzes macrocyclization of the N-terminal 8 residues.

Major toxin belonging to the bicyclic octapeptides amatoxins that acts by binding non-competitively to RNA polymerase II and greatly slowing the elongation of transcripts from target promoters. This is Alpha-amanitin proprotein from Amanita pallidorosea.